We begin with the raw amino-acid sequence, 248 residues long: MPSRTITRLVRLYGGTPLVELPPIFLAPALQFPSLHFASFQCLKFSTTPAPGLKLDLSKHRGVSAIHRTGPRYPLSVSKYPLPRPVKPKEQEKRPSNPKHGLWGFFGPDRKPIPTPEEEYAHGRAWSIQELRQKSWDDLHKLYWLCVKERNRIATARYERQRLQAGYGDYESNNRDKTVRGTQQSIKQVLRERWYAWEDARQLYESGEYSPADAQVMEAEAYAYEPPALDVEEPKGEASDSVKTPPSS.

Disordered regions lie at residues 77 to 107 (VSKYPLPRPVKPKEQEKRPSNPKHGLWGFFG) and 223 to 248 (AYEPPALDVEEPKGEASDSVKTPPSS).

This sequence belongs to the universal ribosomal protein uL29 family. As to quaternary structure, component of the mitochondrial large ribosomal subunit. Mature mitochondrial ribosomes consist of a small (37S) and a large (54S) subunit. The 37S subunit contains at least 33 different proteins and 1 molecule of RNA (15S). The 54S subunit contains at least 45 different proteins and 1 molecule of RNA (21S).

It is found in the mitochondrion. The sequence is that of Large ribosomal subunit protein uL29m (MRPL4) from Ajellomyces capsulatus (strain NAm1 / WU24) (Darling's disease fungus).